A 358-amino-acid polypeptide reads, in one-letter code: Peptide chain release factor 1 (358 aa).

Glutamine 233 carries the post-translational modification N5-methylglutamine.

The protein belongs to the prokaryotic/mitochondrial release factor family. Post-translationally, methylated by PrmC. Methylation increases the termination efficiency of RF1.

Its subcellular location is the cytoplasm. Functionally, peptide chain release factor 1 directs the termination of translation in response to the peptide chain termination codons UAG and UAA. This Clostridium botulinum (strain Loch Maree / Type A3) protein is Peptide chain release factor 1.